The sequence spans 217 residues: Large ribosomal subunit protein uL3 (217 aa).

The segment at 135-154 (ATHGNSLSHRAPGSIGQCQT) is disordered. N5-methylglutamine is present on Q153.

This sequence belongs to the universal ribosomal protein uL3 family. In terms of assembly, part of the 50S ribosomal subunit. Forms a cluster with proteins L14 and L19. In terms of processing, methylated by PrmB.

Its function is as follows. One of the primary rRNA binding proteins, it binds directly near the 3'-end of the 23S rRNA, where it nucleates assembly of the 50S subunit. In Coxiella burnetii (strain CbuG_Q212) (Coxiella burnetii (strain Q212)), this protein is Large ribosomal subunit protein uL3.